Consider the following 138-residue polypeptide: Small ribosomal subunit protein uS8 (138 aa).

This sequence belongs to the universal ribosomal protein uS8 family. As to quaternary structure, part of the 30S ribosomal subunit. Contacts proteins S5 and S12.

Functionally, one of the primary rRNA binding proteins, it binds directly to 16S rRNA central domain where it helps coordinate assembly of the platform of the 30S subunit. In Thermus aquaticus, this protein is Small ribosomal subunit protein uS8.